The chain runs to 558 residues: 2-isopropylmalate synthase (558 aa).

Residues 28–304 (PIWCSVDLRD…DPELEFSNLN (277 aa)) enclose the Pyruvate carboxyltransferase domain. D37, H243, H245, and N279 together coordinate Mg(2+). Positions 438-558 (NRSPYYLKNY…VSALNRSKLK (121 aa)) are regulatory domain.

Belongs to the alpha-IPM synthase/homocitrate synthase family. LeuA type 2 subfamily. Homodimer. It depends on Mg(2+) as a cofactor.

The protein resides in the cytoplasm. The catalysed reaction is 3-methyl-2-oxobutanoate + acetyl-CoA + H2O = (2S)-2-isopropylmalate + CoA + H(+). It functions in the pathway amino-acid biosynthesis; L-leucine biosynthesis; L-leucine from 3-methyl-2-oxobutanoate: step 1/4. Functionally, catalyzes the condensation of the acetyl group of acetyl-CoA with 3-methyl-2-oxobutanoate (2-ketoisovalerate) to form 3-carboxy-3-hydroxy-4-methylpentanoate (2-isopropylmalate). In Clostridium acetobutylicum (strain ATCC 824 / DSM 792 / JCM 1419 / IAM 19013 / LMG 5710 / NBRC 13948 / NRRL B-527 / VKM B-1787 / 2291 / W), this protein is 2-isopropylmalate synthase.